The chain runs to 838 residues: P protein (838 aa).

The Cytoplasmic portion of the chain corresponds to M1–K179. Disordered regions lie at residues L38–S60 and K74–F94. The span at H78–S87 shows a compositional bias: polar residues. The helical transmembrane segment at V180–Y197 threads the bilayer. The Extracellular segment spans residues P198–Q330. N-linked (GlcNAc...) asparagine glycosylation is found at N214, N218, and N273. The helical transmembrane segment at V331–F347 threads the bilayer. Topologically, residues E348–T353 are cytoplasmic. A helical transmembrane segment spans residues L354 to I370. Over G371–D384 the chain is Extracellular. Residues F385–F401 form a helical membrane-spanning segment. The Cytoplasmic portion of the chain corresponds to S402–W423. A helical membrane pass occupies residues A424–L440. Over D441–F513 the chain is Extracellular. N442 is a glycosylation site (N-linked (GlcNAc...) asparagine). The helical transmembrane segment at I514 to L530 threads the bilayer. Topologically, residues Y531 to G620 are cytoplasmic. A helical membrane pass occupies residues I621 to F637. Topologically, residues F638–H647 are extracellular. A helical transmembrane segment spans residues L648 to L664. Residues A665–W679 are Cytoplasmic-facing. A helical transmembrane segment spans residues A680 to A696. Topologically, residues H697–R720 are extracellular. The helical transmembrane segment at L721–S737 threads the bilayer. Residues L738–E760 lie on the Cytoplasmic side of the membrane. Residues V761–C777 form a helical membrane-spanning segment. The Extracellular segment spans residues L778–M817. N-linked (GlcNAc...) asparagine glycosylation is present at N781. The chain crosses the membrane as a helical span at residues V818–V834. Residues V835–N838 lie on the Cytoplasmic side of the membrane.

It belongs to the CitM (TC 2.A.11) transporter family. Expressed in melanocytes and retinal pigment epithelium.

Its subcellular location is the melanosome membrane. The catalysed reaction is chloride(in) = chloride(out). Contributes to a melanosome-specific anion (chloride) current that modulates melanosomal pH for optimal tyrosinase activity required for melanogenesis and the melanosome maturation. One of the components of the mammalian pigmentary system. May serve as a key control point at which ethnic skin color variation is determined. Major determinant of brown and/or blue eye color. Seems to regulate the post-translational processing of tyrosinase, which catalyzes the limiting reaction in melanin synthesis. The protein is P protein of Homo sapiens (Human).